The following is a 524-amino-acid chain: Cytochrome P450 4F3 (524 aa).

A helical membrane pass occupies residues 19–39 (WLLLLLAGASCLLAYILTPIY). Heme is bound at residue Cys-468.

The protein belongs to the cytochrome P450 family. Requires heme as cofactor. Highest level in polymorphonuclear leukocytes and dendritic cells. Detectable in lymph nodes, spleen, bone marrow and peripheral blood. Highly expressed in ovary. Very low level in liver, kidney, and smooth muscle. Expressed in neutrophils (at protein level).

Its subcellular location is the endoplasmic reticulum membrane. It localises to the microsome membrane. It carries out the reaction leukotriene B4 + reduced [NADPH--hemoprotein reductase] + O2 = 18-hydroxy-leukotriene B4 + oxidized [NADPH--hemoprotein reductase] + H2O + H(+). The enzyme catalyses leukotriene B4 + reduced [NADPH--hemoprotein reductase] + O2 = 19-hydroxy-leukotriene B4 + oxidized [NADPH--hemoprotein reductase] + H2O + H(+). The protein operates within lipid metabolism; leukotriene B4 degradation. Its function is as follows. A cytochrome P450 monooxygenase involved in the metabolism of the pro-inflammatory lipid mediator leukotriene B4 (LTB4). Hydroxylates at the omega-1 and omega-2 positions LTB4. This oxidation step leads to LTB4 inactivation, which is postulated to be a crucial part of the resolution of inflammation. Mechanistically, uses molecular oxygen inserting one oxygen atom into a substrate, and reducing the second into a water molecule, with two electrons provided by NADPH via cytochrome P450 reductase (CPR; NADPH-ferrihemoprotein reductase). The polypeptide is Cytochrome P450 4F3 (Mus musculus (Mouse)).